Here is a 122-residue protein sequence, read N- to C-terminus: Large ribosomal subunit protein uL14 (122 aa).

Belongs to the universal ribosomal protein uL14 family. In terms of assembly, part of the 50S ribosomal subunit. Forms a cluster with proteins L3 and L19. In the 70S ribosome, L14 and L19 interact and together make contacts with the 16S rRNA in bridges B5 and B8.

Functionally, binds to 23S rRNA. Forms part of two intersubunit bridges in the 70S ribosome. This Shewanella baltica (strain OS223) protein is Large ribosomal subunit protein uL14.